A 130-amino-acid chain; its full sequence is Histone H2A.6 (130 aa).

The span at 1–12 shows a compositional bias: gly residues; sequence MAGRGKTLGSGG. A disordered region spans residues 1 to 23; sequence MAGRGKTLGSGGAKKATSRSSKA.

It belongs to the histone H2A family. In terms of assembly, the nucleosome is a histone octamer containing two molecules each of H2A, H2B, H3 and H4 assembled in one H3-H4 heterotetramer and two H2A-H2B heterodimers. The octamer wraps approximately 147 bp of DNA. Interacts with VIP1. Not ubiquitinated. Low level of expression, mainly in dividing tissues: floral buds, margins of newly emerging leaves, expanding leaves and the meristematic zone of root tips. Also expressed in many non-dividing cells of the elongation zone of the root.

The protein resides in the nucleus. It localises to the chromosome. In terms of biological role, core component of nucleosome. Nucleosomes wrap and compact DNA into chromatin, limiting DNA accessibility to the cellular machineries which require DNA as a template. Histones thereby play a central role in transcription regulation, DNA repair, DNA replication and chromosomal stability. DNA accessibility is regulated via a complex set of post-translational modifications of histones, also called histone code, and nucleosome remodeling. Required for the T-DNA integration step of plant transformation by Agrobacterium. May play an important role in illegitimate recombination. The polypeptide is Histone H2A.6 (RAT5) (Arabidopsis thaliana (Mouse-ear cress)).